The primary structure comprises 528 residues: MLVLVSLVLCLTGFCLLQWALKERKIVKGLPPGPRPKPIIGNLLDLPPPGALDWLHWLKHKELYGPISSVTIFGQTIIIINGHRVANELMEKRSGVHSSRPHVPIAELAGWQYTLGFIPYDSRLRAYRRALHQEMGNATSISKYHNILDMETHRLLFRILKTPDCLMQHLRKEAGSIILRITYGYITEPEAYDPLIDLVDKAMEDFAQVILPGGWLVNFIPMLKYLPSWFPGCDWQRRAKAFKQRAKAMTDIPYAFVKQQHEQQKHIPSYVSRLLEQNNIKLGSEEELVVKWSAQSIYGGGAETSVSVFACFFQVMALHLNVQKKAQEEIDRVVGASRLPDLSDCKNLPYINAVVKEVLRWHPVAPMGVAHASSKEDIYHRYVIPKGAILVPNIWAMAHDPDFYHNAMDFEPERFLKSGRNEQNPEYDPHQFIFGFGRRTCPGQHLVSANLSLGVARVLAVFNITNAVRDGKKVPISPEFSPGVISRPAPFELSIQVRNAECKRLIEAVGMKFPWEESHAEALAQLRI.

A helical membrane pass occupies residues 2–21 (LVLVSLVLCLTGFCLLQWAL). Asn-137 is a glycosylation site (N-linked (GlcNAc...) asparagine). Residue Cys-441 participates in heme binding. N-linked (GlcNAc...) asparagine glycosylation is found at Asn-450 and Asn-463.

The protein belongs to the cytochrome P450 family. The cofactor is heme.

It is found in the membrane. Cytochrome P450 monooxygenase; part of the gene cluster that mediates the biosynthesis of 2,4'-dihydroxy-3'-methoxypropiophenone. The first step of the pathway is the conversion of acetate into acetyl-CoA by the acyl-CoA ligase ppsA. Acetyl-CoA is then used as a starter unit by the polyketide synthase ppsB and condensed with 4 malonyl-CoA unit to produce the pentaketide backbone. During polyketide extension, the polykedite chain is probably reduced and dehydrated by the KR and PT domains, respectively. O-methylation seems to be catalyzed by an unknown methyltransferase rather than by the CMeT domain of ppsB. Two hydroxylations and one further decarboxylation step catalyzed by yet unknown enzymes are then required to yield 4'-hydroxy-3'-methoxypropiophenone. PpsC functions as a carrier protein to transport 4'-hydroxy-3'-methoxypropiophenone to a specific cell compartment in which 4'-hydroxy-3'-methoxypropiophenone is hydroxylated to 2,4'-dihydroxy-3'-methoxypropiophenone by a still to be identified enzyme. In Aspergillus oryzae (strain ATCC 42149 / RIB 40) (Yellow koji mold), this protein is Cytochrome P450 monooxygenase ppsD.